The following is a 444-amino-acid chain: Glutamyl-tRNA reductase (444 aa).

Residues 49 to 52 (TCNR), serine 109, 114 to 116 (ETQ), and glutamine 120 each bind substrate. Catalysis depends on cysteine 50, which acts as the Nucleophile. 189-194 (GAGKMG) serves as a coordination point for NADP(+).

This sequence belongs to the glutamyl-tRNA reductase family. As to quaternary structure, homodimer.

It catalyses the reaction (S)-4-amino-5-oxopentanoate + tRNA(Glu) + NADP(+) = L-glutamyl-tRNA(Glu) + NADPH + H(+). It participates in porphyrin-containing compound metabolism; protoporphyrin-IX biosynthesis; 5-aminolevulinate from L-glutamyl-tRNA(Glu): step 1/2. Its function is as follows. Catalyzes the NADPH-dependent reduction of glutamyl-tRNA(Glu) to glutamate 1-semialdehyde (GSA). This Bacillus cereus (strain ATCC 14579 / DSM 31 / CCUG 7414 / JCM 2152 / NBRC 15305 / NCIMB 9373 / NCTC 2599 / NRRL B-3711) protein is Glutamyl-tRNA reductase.